We begin with the raw amino-acid sequence, 413 residues long: MDGDIRHNSYDDGSEDVLTGEQSIRNFNINFGPQHPAAHGVLRMVLELDGEIVERADPHIGLLHRGTEKLMESRTYLQNTPYFDRLDYVAPMNQEHAWCLAIEKLTGTAVPRRASIIRVLFSEIGRILNHLLNVTTQAMDVGALTPPLWGFEEREKLMIFYERACGARLHANYFRPGGVHQDLPPDLIDDIEIWAKAFPQVLDDIEGLLTENRIFKQRNADICIITEAEIEKWGYSGVMVRGSGLAWDLRRAQPYECYDEFDFKVAVGKNGDCYDRYLVRMAEMRESTKIILQACAKLRAPDGQGDILARGKLTPPKRAEMKTSMEALIHHFKLYTEGFKVPAGEVYAAVEAPKGEFGVYLVADGTNKPYRAKIRAPGYAHLQSIDAVAKGHQLADVSAIIGTMDVVFGEIDR.

This sequence belongs to the complex I 49 kDa subunit family. As to quaternary structure, NDH-1 is composed of 14 different subunits. Subunits NuoB, C, D, E, F, and G constitute the peripheral sector of the complex.

It localises to the cell inner membrane. It carries out the reaction a quinone + NADH + 5 H(+)(in) = a quinol + NAD(+) + 4 H(+)(out). Its function is as follows. NDH-1 shuttles electrons from NADH, via FMN and iron-sulfur (Fe-S) centers, to quinones in the respiratory chain. The immediate electron acceptor for the enzyme in this species is believed to be ubiquinone. Couples the redox reaction to proton translocation (for every two electrons transferred, four hydrogen ions are translocated across the cytoplasmic membrane), and thus conserves the redox energy in a proton gradient. The chain is NADH-quinone oxidoreductase subunit D from Rhodobacter capsulatus (Rhodopseudomonas capsulata).